We begin with the raw amino-acid sequence, 106 residues long: Small cardioactive peptide-related peptide (106 aa).

The signal sequence occupies residues 1-20 (MFCKHLSFVAITICFLLVLA). The propeptide at 21–41 (KTENEIQQKNIKFDQRTWRNM) is amino-terminal spacer peptide. Q52 is modified (glutamine amide). Residues 55–106 (SDNQPDYTCCGMPLTKYVGICPIGMECCPGLKKVLQKSGQRTIYSVCVADAY) constitute a propeptide, carboxy-terminal spacer peptide.

Expression is seen in the peripheral and central nervous systems in tissues such as the brain, the inferior buccal ganglion, the gastric ganglion, the olfactory lobe, the peduncle lobe and the optic lobe. Expression in the brain is distributed in the median inferior frontal lobe, the superior buccal lobe, the prebranchial lobe and the pedal lobe. Not expressed in the vasomotor lobe or the palliovisceral lobe that controls the cardiac system.

The protein resides in the secreted. Functionally, evokes contractions in the radula protractor muscle, and may regulate feeding behavior and gut motility by controlling muscle contraction of the buccal mass. The sequence is that of Small cardioactive peptide-related peptide from Octopus vulgaris (Common octopus).